Reading from the N-terminus, the 276-residue chain is Elongation factor Ts (276 aa).

Residues 81-84 are involved in Mg(2+) ion dislocation from EF-Tu; that stretch reads TDFV.

Belongs to the EF-Ts family.

The protein localises to the cytoplasm. Functionally, associates with the EF-Tu.GDP complex and induces the exchange of GDP to GTP. It remains bound to the aminoacyl-tRNA.EF-Tu.GTP complex up to the GTP hydrolysis stage on the ribosome. The protein is Elongation factor Ts of Leifsonia xyli subsp. xyli (strain CTCB07).